A 257-amino-acid chain; its full sequence is Snake venom serine protease serpentokallikrein-2 (257 aa).

Residues 1–18 (MVLIRVLANLLILQLSYA) form the signal peptide. The propeptide occupies 19–24 (QKSSEL). The Peptidase S1 domain maps to 25–248 (VIGGDECNIN…HLDWIKGIIA (224 aa)). 6 cysteine pairs are disulfide-bonded: cysteine 31–cysteine 162, cysteine 49–cysteine 65, cysteine 97–cysteine 255, cysteine 141–cysteine 209, cysteine 173–cysteine 188, and cysteine 199–cysteine 224. The Charge relay system role is filled by histidine 64. Asparagine 102 carries an N-linked (GlcNAc...) asparagine glycan. Aspartate 109 (charge relay system) is an active-site residue. Serine 203 functions as the Charge relay system in the catalytic mechanism.

This sequence belongs to the peptidase S1 family. Snake venom subfamily. As to quaternary structure, monomer. In terms of tissue distribution, expressed by the venom gland.

The protein resides in the secreted. Snake venom serine protease that may act in the hemostasis system of the prey. The polypeptide is Snake venom serine protease serpentokallikrein-2 (Protobothrops mucrosquamatus (Taiwan habu)).